We begin with the raw amino-acid sequence, 661 residues long: DNA-directed RNA polymerase subunit beta' (661 aa).

Zn(2+)-binding residues include C69, C71, C87, and C90. Residues D489, D491, and D493 each contribute to the Mg(2+) site.

Belongs to the RNA polymerase beta' chain family. RpoC1 subfamily. As to quaternary structure, in plastids the minimal PEP RNA polymerase catalytic core is composed of four subunits: alpha, beta, beta', and beta''. When a (nuclear-encoded) sigma factor is associated with the core the holoenzyme is formed, which can initiate transcription. Requires Mg(2+) as cofactor. Zn(2+) is required as a cofactor.

The protein localises to the plastid. It localises to the chloroplast. It catalyses the reaction RNA(n) + a ribonucleoside 5'-triphosphate = RNA(n+1) + diphosphate. Functionally, DNA-dependent RNA polymerase catalyzes the transcription of DNA into RNA using the four ribonucleoside triphosphates as substrates. The polypeptide is DNA-directed RNA polymerase subunit beta' (Chaetosphaeridium globosum (Charophycean green alga)).